Consider the following 355-residue polypeptide: Alkanal monooxygenase alpha chain (355 aa).

It belongs to the bacterial luciferase oxidoreductase family. Heterodimer of an alpha and a beta chain.

The catalysed reaction is a long-chain fatty aldehyde + FMNH2 + O2 = a long-chain fatty acid + hnu + FMN + H2O + 2 H(+). Its function is as follows. Light-emitting reaction in luminous bacteria. This Vibrio harveyi (Beneckea harveyi) protein is Alkanal monooxygenase alpha chain (luxA).